Reading from the N-terminus, the 658-residue chain is MRGELNIPALSRFGKSISASLHHQNGSSRDDNDSNPYENRSSNSGLNRRNSVFGLPSSGLSSRLSKPSLSSINNSNNSSSNTGGNVLPNPALTPVRNMSNKPPLTWSPSSANLFGTSKVTSIIGNNVSDVVPPVIKKALASSHGGGMSLSIVLLEPVLYLAGFDLNECQIENPALLRGALVLRVAKPANIRGISLSFTGRSRTEWPEGIPVKGHDTYEDKVIISHNWKFYEPTMKDADAPQHGADVARLVGEQLPLPSSAAASLRGYSVFAPGEYTYNFDLAIPNCFPESVEAKMGWVRYFLEATVERFGTFKSNLNGRTPVQLVRTPSPASLSSSELINISRDWDERLHYELQVSGKSFRLGEVVPITFRFLLLDKVRLYKLSISVVESSEYWCRSRKFHRVDPKRRVLLAERSAKHQNTDNLFETPDEGDGLSSAVFNFNVALPTCLVKERDRLTFDTTYKYIKVRHRLKALLVLSIENTENPEKRKYFEINIETPVRILSCRCVKDSTLLPPYESSSQGDNQVLLPCPCRLATTHVEPTEVTAFTTQSVLASSAPSAGRPAAAQISRPAQLFRIPSTNPPPFDGDVCPPACNTPPPNYDELFDVLSSISIQDCETDRANDDTILNNRVRRSGTIREEAPHRSLSRTVSRSFEIPR.

Disordered stretches follow at residues 21-107 (LHHQ…LTWS) and 638-658 (REEAPHRSLSRTVSRSFEIPR). Positions 39-81 (NRSSNSGLNRRNSVFGLPSSGLSSRLSKPSLSSINNSNNSSSN) are enriched in low complexity. Over residues 96–107 (RNMSNKPPLTWS) the composition is skewed to polar residues. Ser-653 carries the post-translational modification Phosphoserine.

This sequence belongs to the ALY1 family.

It is found in the cytoplasm. May regulate endocytosis in response to extracellular stimuli. In Schizosaccharomyces pombe (strain 972 / ATCC 24843) (Fission yeast), this protein is Putative arrestin-related trafficking adapter C2D10.04.